We begin with the raw amino-acid sequence, 357 residues long: Isopentenyl-diphosphate delta-isomerase (357 aa).

6–7 serves as a coordination point for substrate; the sequence is RK. FMN is bound by residues Ser62, 63 to 65, Ser93, and Asn122; that span reads AMT. 93 to 95 contributes to the substrate binding site; the sequence is SQR. Position 156 (Gln156) interacts with substrate. Residue Glu157 participates in Mg(2+) binding. FMN contacts are provided by residues Lys186, Thr216, 267-269, and 288-289; these read GVR and AL.

This sequence belongs to the IPP isomerase type 2 family. Homooctamer. Dimer of tetramers. FMN is required as a cofactor. It depends on NADPH as a cofactor. The cofactor is Mg(2+).

The protein resides in the cytoplasm. The enzyme catalyses isopentenyl diphosphate = dimethylallyl diphosphate. In terms of biological role, involved in the biosynthesis of isoprenoids. Catalyzes the 1,3-allylic rearrangement of the homoallylic substrate isopentenyl (IPP) to its allylic isomer, dimethylallyl diphosphate (DMAPP). This Methanothrix thermoacetophila (strain DSM 6194 / JCM 14653 / NBRC 101360 / PT) (Methanosaeta thermophila) protein is Isopentenyl-diphosphate delta-isomerase.